The following is a 289-amino-acid chain: 4-diphosphocytidyl-2-C-methyl-D-erythritol kinase (289 aa).

Lys-10 is an active-site residue. ATP is bound at residue 94–104 (PVAAGLAGGSS). Asp-136 is an active-site residue.

It belongs to the GHMP kinase family. IspE subfamily.

The enzyme catalyses 4-CDP-2-C-methyl-D-erythritol + ATP = 4-CDP-2-C-methyl-D-erythritol 2-phosphate + ADP + H(+). Its pathway is isoprenoid biosynthesis; isopentenyl diphosphate biosynthesis via DXP pathway; isopentenyl diphosphate from 1-deoxy-D-xylulose 5-phosphate: step 3/6. Functionally, catalyzes the phosphorylation of the position 2 hydroxy group of 4-diphosphocytidyl-2C-methyl-D-erythritol. The polypeptide is 4-diphosphocytidyl-2-C-methyl-D-erythritol kinase (Bacillus cytotoxicus (strain DSM 22905 / CIP 110041 / 391-98 / NVH 391-98)).